We begin with the raw amino-acid sequence, 552 residues long: Arginine--tRNA ligase (552 aa).

The 'HIGH' region signature appears at 124-134 (GNPTGPLHLAH).

Belongs to the class-I aminoacyl-tRNA synthetase family. As to quaternary structure, monomer.

The protein localises to the cytoplasm. It catalyses the reaction tRNA(Arg) + L-arginine + ATP = L-arginyl-tRNA(Arg) + AMP + diphosphate. This chain is Arginine--tRNA ligase, found in Tropheryma whipplei (strain Twist) (Whipple's bacillus).